The following is a 422-amino-acid chain: Probable metallocarboxypeptidase A (422 aa).

The signal sequence occupies residues 1-17 (MRSVLSLALLAVNVVTA). A propeptide spans 18 to 112 (AVVAPFDYSG…FEAYSAGYAP (95 aa)) (activation peptide). Residues 119-419 (SYHSYQDHLS…AGTVAMLKAV (301 aa)) enclose the Peptidase M14 domain. Residues His-179 and Glu-182 each coordinate Zn(2+). Substrate is bound by residues 179–182 (HARE), Arg-237, and 254–255 (NR). A disulfide bridge links Cys-248 with Cys-271. His-309 lines the Zn(2+) pocket. Position 310-311 (310-311 (SY)) interacts with substrate. Glu-385 acts as the Proton donor/acceptor in catalysis.

This sequence belongs to the peptidase M14 family. Requires Zn(2+) as cofactor.

The protein resides in the secreted. In terms of biological role, extracellular metalloprotease that contributes to pathogenicity. The chain is Probable metallocarboxypeptidase A (MCPA) from Trichophyton verrucosum (strain HKI 0517).